Consider the following 282-residue polypeptide: MAGEMVEMEVNESAVGSSKTRVISYLRNAGFLEASDSIAVEEPLAIDILGPDGITVRAGVIMRTPVMDRYLVAGFLYSEGLISGISDIEGFEGVDEDGVSHQNHATVKIGKRIGFNVNSRLLNSACGICGRSTIADLLIRHGKIGTDTRIDSETILGLPTAMGRAQALFLKTGGVHAAALFDVQGRLHAVCEDIGRHNAVDKVVGYTLLEGKDTDNSVLMVSGRAGFEIVEKAFLAGFPIVSSVSAPSSLAIQIAEAVGITLVCFVRNNRFNIYSHPERIIP.

Residue cysteine 126 is the Cysteine persulfide intermediate of the active site. Residue 265–270 (FVRNNR) participates in Mo-bis(molybdopterin guanine dinucleotide) binding.

It belongs to the FdhD family.

It is found in the cytoplasm. Its function is as follows. Required for formate dehydrogenase (FDH) activity. Acts as a sulfur carrier protein that transfers sulfur from IscS to the molybdenum cofactor prior to its insertion into FDH. This chain is Sulfur carrier protein FdhD, found in Thermoplasma acidophilum (strain ATCC 25905 / DSM 1728 / JCM 9062 / NBRC 15155 / AMRC-C165).